Here is a 199-residue protein sequence, read N- to C-terminus: Peptidyl-tRNA hydrolase (199 aa).

Residue Y25 participates in tRNA binding. The active-site Proton acceptor is H30. 3 residues coordinate tRNA: Y76, N78, and N124.

It belongs to the PTH family. Monomer.

Its subcellular location is the cytoplasm. It catalyses the reaction an N-acyl-L-alpha-aminoacyl-tRNA + H2O = an N-acyl-L-amino acid + a tRNA + H(+). Hydrolyzes ribosome-free peptidyl-tRNAs (with 1 or more amino acids incorporated), which drop off the ribosome during protein synthesis, or as a result of ribosome stalling. In terms of biological role, catalyzes the release of premature peptidyl moieties from peptidyl-tRNA molecules trapped in stalled 50S ribosomal subunits, and thus maintains levels of free tRNAs and 50S ribosomes. This is Peptidyl-tRNA hydrolase from Mycobacterium leprae (strain Br4923).